Reading from the N-terminus, the 253-residue chain is Glutamate racemase (253 aa).

Residues 7 to 8 (DS) and 39 to 40 (YG) contribute to the substrate site. The Proton donor/acceptor role is filled by Cys70. Substrate is bound at residue 71–72 (NT). Residue Cys180 is the Proton donor/acceptor of the active site. 181 to 182 (TH) provides a ligand contact to substrate.

It belongs to the aspartate/glutamate racemases family.

The catalysed reaction is L-glutamate = D-glutamate. The protein operates within cell wall biogenesis; peptidoglycan biosynthesis. Functionally, provides the (R)-glutamate required for cell wall biosynthesis. This chain is Glutamate racemase, found in Halothermothrix orenii (strain H 168 / OCM 544 / DSM 9562).